Reading from the N-terminus, the 79-residue chain is Acyl carrier protein (79 aa).

A Carrier domain is found at 1–76 (MSLEDDVIAI…DVFTYIKKRQ (76 aa)). Serine 36 carries the post-translational modification O-(pantetheine 4'-phosphoryl)serine.

This sequence belongs to the acyl carrier protein (ACP) family. 4'-phosphopantetheine is transferred from CoA to a specific serine of apo-ACP by AcpS. This modification is essential for activity because fatty acids are bound in thioester linkage to the sulfhydryl of the prosthetic group.

It is found in the cytoplasm. It functions in the pathway lipid metabolism; fatty acid biosynthesis. Carrier of the growing fatty acid chain in fatty acid biosynthesis. This is Acyl carrier protein from Chlamydia pneumoniae (Chlamydophila pneumoniae).